Here is a 117-residue protein sequence, read N- to C-terminus: MTRVRRGYIARRRRTKIRLFTSTFRGAHSRLTRTTTQQKMRALVSSHRDRCRQKRDFRRLWITRINAVTRENRVSYSYSRLMHDLYKRQLLLNRKILAQIAISNRNCIYMISNEIIK.

The protein belongs to the bacterial ribosomal protein bL20 family.

The protein localises to the plastid. It is found in the chloroplast. Binds directly to 23S ribosomal RNA and is necessary for the in vitro assembly process of the 50S ribosomal subunit. It is not involved in the protein synthesizing functions of that subunit. In Drimys granadensis, this protein is Large ribosomal subunit protein bL20c.